We begin with the raw amino-acid sequence, 288 residues long: Acetyl-coenzyme A carboxylase carboxyl transferase subunit beta (288 aa).

The 257-residue stretch at 32–288 folds into the CoA carboxyltransferase N-terminal domain; it reads LLLICPKCKK…ILMLHNVEAR (257 aa). The Zn(2+) site is built by cysteine 36, cysteine 39, cysteine 55, and cysteine 58. The segment at 36–58 adopts a C4-type zinc-finger fold; sequence CPKCKKTLLKSELADNLDVCREC.

Belongs to the AccD/PCCB family. As to quaternary structure, acetyl-CoA carboxylase is a heterohexamer composed of biotin carboxyl carrier protein (AccB), biotin carboxylase (AccC) and two subunits each of ACCase subunit alpha (AccA) and ACCase subunit beta (AccD). Zn(2+) serves as cofactor.

It localises to the cytoplasm. It catalyses the reaction N(6)-carboxybiotinyl-L-lysyl-[protein] + acetyl-CoA = N(6)-biotinyl-L-lysyl-[protein] + malonyl-CoA. The protein operates within lipid metabolism; malonyl-CoA biosynthesis; malonyl-CoA from acetyl-CoA: step 1/1. Functionally, component of the acetyl coenzyme A carboxylase (ACC) complex. Biotin carboxylase (BC) catalyzes the carboxylation of biotin on its carrier protein (BCCP) and then the CO(2) group is transferred by the transcarboxylase to acetyl-CoA to form malonyl-CoA. This chain is Acetyl-coenzyme A carboxylase carboxyl transferase subunit beta, found in Ruminiclostridium cellulolyticum (strain ATCC 35319 / DSM 5812 / JCM 6584 / H10) (Clostridium cellulolyticum).